The following is a 254-amino-acid chain: Imidazole glycerol phosphate synthase subunit HisF (254 aa).

Active-site residues include Asp11 and Asp130.

Belongs to the HisA/HisF family. As to quaternary structure, heterodimer of HisH and HisF.

It localises to the cytoplasm. It carries out the reaction 5-[(5-phospho-1-deoxy-D-ribulos-1-ylimino)methylamino]-1-(5-phospho-beta-D-ribosyl)imidazole-4-carboxamide + L-glutamine = D-erythro-1-(imidazol-4-yl)glycerol 3-phosphate + 5-amino-1-(5-phospho-beta-D-ribosyl)imidazole-4-carboxamide + L-glutamate + H(+). It functions in the pathway amino-acid biosynthesis; L-histidine biosynthesis; L-histidine from 5-phospho-alpha-D-ribose 1-diphosphate: step 5/9. Functionally, IGPS catalyzes the conversion of PRFAR and glutamine to IGP, AICAR and glutamate. The HisF subunit catalyzes the cyclization activity that produces IGP and AICAR from PRFAR using the ammonia provided by the HisH subunit. The polypeptide is Imidazole glycerol phosphate synthase subunit HisF (Solibacter usitatus (strain Ellin6076)).